The chain runs to 397 residues: Bifunctional enzyme IspD/IspF (397 aa).

Residues 1-233 (MCAKKYKIAA…KLLFEEPKFR (233 aa)) form a 2-C-methyl-D-erythritol 4-phosphate cytidylyltransferase region. The tract at residues 233 to 397 (RVGAGYDIHK…VLLHTNFYWK (165 aa)) is 2-C-methyl-D-erythritol 2,4-cyclodiphosphate synthase. Residues aspartate 239 and histidine 241 each coordinate a divalent metal cation. 4-CDP-2-C-methyl-D-erythritol 2-phosphate contacts are provided by residues 239–241 (DIH) and 270–271 (HS). An a divalent metal cation-binding site is contributed by histidine 278. 4-CDP-2-C-methyl-D-erythritol 2-phosphate contacts are provided by residues 292 to 294 (DIG), 368 to 371 (TTAE), tyrosine 375, and arginine 378.

In the N-terminal section; belongs to the IspD/TarI cytidylyltransferase family. IspD subfamily. It in the C-terminal section; belongs to the IspF family. It depends on a divalent metal cation as a cofactor.

It carries out the reaction 2-C-methyl-D-erythritol 4-phosphate + CTP + H(+) = 4-CDP-2-C-methyl-D-erythritol + diphosphate. The enzyme catalyses 4-CDP-2-C-methyl-D-erythritol 2-phosphate = 2-C-methyl-D-erythritol 2,4-cyclic diphosphate + CMP. The protein operates within isoprenoid biosynthesis; isopentenyl diphosphate biosynthesis via DXP pathway; isopentenyl diphosphate from 1-deoxy-D-xylulose 5-phosphate: step 2/6. It functions in the pathway isoprenoid biosynthesis; isopentenyl diphosphate biosynthesis via DXP pathway; isopentenyl diphosphate from 1-deoxy-D-xylulose 5-phosphate: step 4/6. Bifunctional enzyme that catalyzes the formation of 4-diphosphocytidyl-2-C-methyl-D-erythritol from CTP and 2-C-methyl-D-erythritol 4-phosphate (MEP) (IspD), and catalyzes the conversion of 4-diphosphocytidyl-2-C-methyl-D-erythritol 2-phosphate (CDP-ME2P) to 2-C-methyl-D-erythritol 2,4-cyclodiphosphate (ME-CPP) with a corresponding release of cytidine 5-monophosphate (CMP) (IspF). The sequence is that of Bifunctional enzyme IspD/IspF from Wolbachia pipientis wMel.